A 319-amino-acid chain; its full sequence is Phosphoenolpyruvate transferase (319 aa).

Asp-50 provides a ligand contact to 7,8-didemethyl-8-hydroxy-5-deazariboflavin.

Belongs to the CofD family. As to quaternary structure, homodimer. It depends on Mg(2+) as a cofactor.

It catalyses the reaction enolpyruvoyl-2-diphospho-5'-guanosine + 7,8-didemethyl-8-hydroxy-5-deazariboflavin = dehydro coenzyme F420-0 + GMP + H(+). It functions in the pathway cofactor biosynthesis; coenzyme F420 biosynthesis. Functionally, catalyzes the transfer of the phosphoenolpyruvate moiety from enoylpyruvoyl-2-diphospho-5'-guanosine (EPPG) to 7,8-didemethyl-8-hydroxy-5-deazariboflavin (FO) with the formation of dehydro coenzyme F420-0 and GMP. This is Phosphoenolpyruvate transferase from Streptomyces avermitilis (strain ATCC 31267 / DSM 46492 / JCM 5070 / NBRC 14893 / NCIMB 12804 / NRRL 8165 / MA-4680).